A 138-amino-acid polypeptide reads, in one-letter code: MPASSYFLLFFFMNFFSPAQSYLLTHCEPVNETVSVEKDGCPKCLAFQTSICSGHCFTKEPVYKSPFSSIYQHVCTYRDVRYETIRLPDCRPGVDPHVTYPVALSCECSLCTMDTSDCTIESLNPDFCMTQKEFILDY.

Positions 1 to 21 (MPASSYFLLFFFMNFFSPAQS) are cleaved as a signal peptide. 6 cysteine pairs are disulfide-bonded: cysteine 27–cysteine 75, cysteine 41–cysteine 90, cysteine 44–cysteine 128, cysteine 52–cysteine 106, cysteine 56–cysteine 108, and cysteine 111–cysteine 118. Asparagine 31 carries N-linked (GlcNAc...) asparagine glycosylation.

This sequence belongs to the glycoprotein hormones subunit beta family. Heterodimer of an alpha and a beta chain.

It localises to the secreted. Functionally, involved in gametogenesis and steroidogenesis. The sequence is that of Gonadotropin subunit beta-2 (cgbb) from Clarias gariepinus (North African catfish).